The primary structure comprises 176 residues: Small ribosomal subunit protein uS5 (176 aa).

Residues Leu11–Val74 form the S5 DRBM domain.

The protein belongs to the universal ribosomal protein uS5 family. As to quaternary structure, part of the 30S ribosomal subunit. Contacts proteins S4 and S8.

In terms of biological role, with S4 and S12 plays an important role in translational accuracy. Functionally, located at the back of the 30S subunit body where it stabilizes the conformation of the head with respect to the body. In Rickettsia massiliae (strain Mtu5), this protein is Small ribosomal subunit protein uS5.